The chain runs to 473 residues: Lipid A galacturonosyltransferase RgtD (473 aa).

The next 10 membrane-spanning stretches (helical) occupy residues 6 to 26 (GLLIVLGFTLWRVVMLNFDAT), 68 to 88 (AIYWIRLLGPLIHMAAALVLM), 94 to 114 (FVGPEIEGWTGATYITLPGVA), 118 to 138 (VFFSTDVILLFFIAIALLAYF), 160 to 180 (FLTKYAVLFVVPGGAIALLLI), 190 to 210 (VIIAVAVAAVVALPNLWWNLQ), 238 to 258 (FFAAQFGVVGPIIFFAMLWAV), 271 to 291 (KMLVWLSMPVVLLITLQATVA), 295 to 315 (ANWAVTAYVAGTILAVWLLYL), and 327 to 347 (INGIASLLFPLATIFPHQLLL).

The protein localises to the cell membrane. It participates in bacterial outer membrane biogenesis; LPS lipid A biosynthesis. In terms of biological role, involved in the modification of the lipopolysaccharide (LPS) lipid A moiety. Catalyzes the transfer of a galacturonic acid (GalA) residue to the 4'-position of 4'-dephosphorylated lipid A, using dodecaprenyl phosphate-GalA as the donor substrate. Acts before the other GalA transferases RgtA, RgtB and RgtC. This is Lipid A galacturonosyltransferase RgtD from Rhizobium johnstonii (strain DSM 114642 / LMG 32736 / 3841) (Rhizobium leguminosarum bv. viciae).